Here is a 3014-residue protein sequence, read N- to C-terminus: MSTNPKPQRKTKRNTNRRPQDVKFPGGGQIVGGVYLLPRRGPRLGVRATRKTSERSQPRGRRQPIPKARQPTGRSWGQPGYPWPLYANEGLGWAGWLLSPRGSRPNWGPNDPRRKSRNLGKVIDTLTCGFADLMGYIPLVGGPVGGVARALAHGVRVLEDGVNYATGNLPGCSFSIFILALLSCLTVPTSAVPYRNASGVYHVTNDCPNSSIVYEAEDLILHAPGCVPCVRQGNVSRCWVQITPTLSAPSLGAVTAPLRRAVDYLAGGAALCSALYVGDACGAVFLVGQMFTYSPRRHNVVQDCNCSIYSGHITGHRMAWDMMMNWSPTTALVMAQLLRIPQVVIDIIAGAHWGVLFAAAYYASAANWAKVVLVLFLFAGVDANTRTVGGSAAQGARGLASLFTPGPQQNLQLINTNGSWHINRTALNCNDSLQTGFVAGLLYYHKFNSTGCPQRMASCRPLAAFDQGWGTISYAAVSGPSDDKPYCWHYPPRPCGIVPARGVCGPVYCFTPSPVVVGTTDRKGNPTYSWGENETDIFLLNNTRPPTGNWFGCTWMNSTGFVKTCGAPPCNLGPTGNNSLKCPTDCFRKHPDATYTKCGSGPWLTPRCLVHYPYRLWHYPCTLNYTIFKVRMYIGGLEHRLEVACNWTRGERCDLEDRDRAELSPLLHTTTQWAILPCSFTPTPALSTGLIHLHQNIVDTQYLYGLSSSIVSWAVKWEYIVLAFLLLADARICTCLWIMLLVCQAEAALENVIVLNAAAAAGTHGFFWGLLVICFAWHFKGRLVPGATYLCLGIWPLLLLLFLLPQRALALDSSDGGTVGCLVLTILTIFTLTPGYKKMVVLVIWWLQYFIARVEAFIHVWVPPLQVRGGRDAIIMLTCLFHPALGFEVTKILLGILGPLYLLQYSLIKLPYFIRARALLRACLLAKHLACGRYVQAALLHLGRLTGTYIYDHLAPMKDWAASGLRDLAVATEPIIFSPMETKVITWGADTAACGDILAGLPVSARRGHEIFLGPADDIREAGWRLLAPITAYAQQTRGVLGAIIVSLTGRDKNEAEGEVQVLSTATQTFLGTCINGVMWTVFHGAGAKTLAGPKGPVVQMYTNVDKDLVGWPTPPGTRSLTPCTCGSADLYLVTRHADVVPARRRGDTRASLLSPRPISYLKGSSGGPVMCPSGHVVGVFRAAVCTRGVAKALDFIPVENLETTMRSPVFTDNSTPPAVPHEFQVGHLHAPTGSGKSTKVPAAYAAQGYKVLVLNPSVAATLGFGAYMSRAYGVDPNIRTGVRTVTTGAAITYSTYGKFLADGGCSGGAYDVIICDECHSQDATTILGIGTVLDQAETAGARLVVLATATPPGSVTTPHPNIEEVALPSEGEIPFYGRAIPLALIKGGRHLIFCHSKKKCDELAKQLTSQGVNAVAYYRGLDVAVIPATGDVVVCSTDALMTGFTGDFDSVIDCNTTVTQTVDFSLDPTFTIETTTVPQDAVSRSQRRGRTGRGRHGIYRYVSSGERPSGIFDSVVLCECYDAGCAWYDLTPAETTVRLRAYLNTPGLPVCQDHLEFWEGVFTGLTNIDAHMLSQTKQGGENFPYLVAYQATVCVRAKAPPPSWDTMWKCMLRLKPTLTGPTPLLYRLGAVQNEITLTHPITKYIMACMSADLEVITSTWVLVGGVVAALAAYCLTVGSVAIVGRIILSGRPAIIPDREVLYQQFDEMEECSASLPYMDEARAIAEQFKEKVLGLIGTAGQKAETLKPAATSMWNRAEQFWAKHMWNFVSGIQYLAGLSTLPGNPAVATLMSFTAAVTSPLTTQQTLLFNILGGWVASQIAPPTAATAFVVSGMAGAAVGSIGLGRVLIDILAGYGAGVAGALVAFKIMCGEKPTAEDLVNLLPSILCPGALVVGVICAAVLRRHIGPGEGAVQWMNRLIAFASRGNHVSPTHYVPETDASAKVTQLLSSLTVTSLLKRLHTWIGEDYSTPCDGTWLRAIWDWVCTALTDFKAWLQAKLLPQLPGVPFLSCQRGYRGVWRGDGVNSTKCPCGATISGHVKNGTMRIVGPKLCSNTWHGTFPINATTTGPSVPAPAPNYKFALWRVGAADYAEVRRVGDYHYITGVTQDNLKCPCQVPSPEFFTELDGVRIHRYAPPCNPLLREEVCFSVGLHSFVVGSQLPCEPEPDVTVLTSMLSDPAHITAETAKRRLDRGSPPSLASSSASQLSAPSLKATCTTQGHHPDADLIEANLLWRQCMGGNITRVEAENKVVILDSFEPLKADDDDREISVSADCFRRGPAFPPALPIWARPGYDPPLLETWKQPDYDPPQVSGCPLPPAGLPPVPPPRRKRKPVVLSDSNVSQVLADLAHARFKADTQSIEGQDSAVGTSSQPDSGPEEKRDDDSDAASYSSMPPLEGEPGDPDLSSGSWSTVSDEDSVVCCSMSYSWTGALITPCSAEEEKLPINPLSNTLLRHHNLVYSTSSRSAGQRQKKVTFDRLQVLDDHYREVVDEMKRLASKVKARLLPLEEACGLTPPHSARSKYGYGAKEVRSLDKKALNHIKGVWQDLLDDSDTPLPTTIMAKNEVFAVEPSKGGKKPARLIVYPDLGVRVCEKRALYDIAQKLPTALMGPSYGFQYSPAQRVEFLLKTWRSKKTPMAFSYDTRCFDSTVTEHDIMTEESIYQSCDLQPEARAAIRSLTQRLYCGGPMYNSKGQQCGYRRCRASGVFTTSMGNTMTCYIKALASCRAAKLRDCTLLVCGDDLVAICESQGTHEDEASLRAFTEAMTRYSAPPGDPPVPAYDLELVTSCSSNVSVAHDASGNRVYYLTRDPQVPLARAAWETAKHSPVNSWLGNIIMYAPTLWARIVLMTHFFSVLQSQEQLEKALAFEMYGSVYSVTPLDLPAIIQRLHGLSAFTLHSYSPSEINRVSSCLRKLGVPPLRAWRHRARAVRAKLIAQGGKAAICGIYLFNWAVKTKRKLTPLADADRLDLSSWFTVGAGGGDIYHSMSRARPRCILLCLLLLTVGVGIFLLPAR.

At serine 2 the chain carries N-acetylserine; by host. Positions 2 to 23 (STNPKPQRKTKRNTNRRPQDVK) are interaction with STAT1. An interaction with EIF2AK2/PKR region spans residues 2–58 (STNPKPQRKTKRNTNRRPQDVKFPGGGQIVGGVYLLPRRGPRLGVRATRKTSERSQP). The tract at residues 2-59 (STNPKPQRKTKRNTNRRPQDVKFPGGGQIVGGVYLLPRRGPRLGVRATRKTSERSQPR) is interaction with DDX3X. Residues 2–75 (STNPKPQRKT…PKARQPTGRS (74 aa)) form a disordered region. Residues 2–168 (STNPKPQRKT…EDGVNYATGN (167 aa)) are Cytoplasmic-facing. 2 consecutive short sequence motifs (nuclear localization signal) follow at residues 5–13 (PKPQRKTKR) and 38–43 (PRRGPR). Positions 7 to 16 (PQRKTKRNTN) are enriched in basic residues. Residues 32-47 (GGVYLLPRRGPRLGVR) are compositionally biased toward low complexity. Residue serine 53 is modified to Phosphoserine; by host. Short sequence motifs (nuclear localization signal) lie at residues 58–64 (PRGRRQP) and 66–71 (PKARQP). Residues serine 99 and serine 116 each carry the phosphoserine; by host modification. An important for endoplasmic reticulum and mitochondrial localization region spans residues 112–152 (PRRKSRNLGKVIDTLTCGFADLMGYIPLVGGPVGGVARALA). Residues 122–173 (VIDTLTCGFADLMGYIPLVGGPVGGVARALAHGVRVLEDGVNYATGNLPGCS) are interaction with APOA2. The interval 164 to 167 (YATG) is important for lipid droplets localization. Residues 169–189 (LPGCSFSIFILALLSCLTVPT) traverse the membrane as a helical segment. A propeptide spans 178–191 (ILALLSCLTVPTSA) (ER anchor for the core protein, removed in mature form by host signal peptidase). At 190–358 (SAVPYRNASG…AGAHWGVLFA (169 aa)) the chain is on the lumenal side. Residues asparagine 196, asparagine 209, and asparagine 234 are each glycosylated (N-linked (GlcNAc...) asparagine; by host). Residues 265–296 (LAGGAALCSALYVGDACGAVFLVGQMFTYSPR) are important for fusion. N-linked (GlcNAc...) asparagine; by host glycosylation occurs at asparagine 305. A helical transmembrane segment spans residues 359–379 (AAYYASAANWAKVVLVLFLFA). At 380-726 (GVDANTRTVG…WEYIVLAFLL (347 aa)) the chain is on the lumenal side. The HVR1 stretch occupies residues 385–412 (TRTVGGSAAQGARGLASLFTPGPQQNLQ). N-linked (GlcNAc...) (high mannose) asparagine; by host glycosylation is found at asparagine 417, asparagine 423, and asparagine 430. 4 cysteine pairs are disulfide-bonded: cysteine 429-cysteine 553, cysteine 452-cysteine 459, cysteine 487-cysteine 495, and cysteine 504-cysteine 509. N-linked (GlcNAc...) asparagine; by host glycosylation is present at asparagine 448. The interval 475 to 479 (AAVSG) is HVR2. A CD81-binding 1 region spans residues 481–494 (SDDKPYCWHYPPRP). Residue asparagine 533 is glycosylated (N-linked (GlcNAc...) asparagine; by host). The tract at residues 545 to 552 (PPTGNWFG) is CD81-binding 2. N-linked (GlcNAc...) asparagine; by host glycosylation is present at asparagine 557. Cysteine 565 and cysteine 570 are disulfide-bonded. The N-linked (GlcNAc...) asparagine; by host glycan is linked to asparagine 578. 3 disulfides stabilise this stretch: cysteine 582/cysteine 586, cysteine 598/cysteine 621, and cysteine 608/cysteine 645. N-linked (GlcNAc...) (high mannose) asparagine; by host glycosylation is found at asparagine 624 and asparagine 646. Cysteines 653 and 678 form a disulfide. A PKR/eIF2-alpha phosphorylation homology domain (PePHD) region spans residues 661 to 672 (AELSPLLHTTTQ). Residues 727-747 (LADARICTCLWIMLLVCQAEA) traverse the membrane as a helical segment. The Lumenal segment spans residues 748-758 (ALENVIVLNAA). The helical transmembrane segment at 759-779 (AAAGTHGFFWGLLVICFAWHF) threads the bilayer. Residues 780-783 (KGRL) are Cytoplasmic-facing. A helical membrane pass occupies residues 784-804 (VPGATYLCLGIWPLLLLLFLL). Over 805–814 (PQRALALDSS) the chain is Lumenal. The chain crosses the membrane as a helical span at residues 815-835 (DGGTVGCLVLTILTIFTLTPG). Residues 836–882 (YKKMVVLVIWWLQYFIARVEAFIHVWVPPLQVRGGRDAIIMLTCLFH) are Cytoplasmic-facing. Residues 883–903 (PALGFEVTKILLGILGPLYLL) form a helical membrane-spanning segment. Over 904–929 (QYSLIKLPYFIRARALLRACLLAKHL) the chain is Lumenal. Residues 904–1027 (QYSLIKLPYF…DIREAGWRLL (124 aa)) enclose the Peptidase C18 domain. Residues 905-1207 (YSLIKLPYFI…PVENLETTMR (303 aa)) form a protease NS2-3 region. A lipid anchor (S-palmitoyl cysteine; by host) is attached at cysteine 923. Residues 930–950 (ACGRYVQAALLHLGRLTGTYI) traverse the membrane as a helical segment. Positions 930–950 (ACGRYVQAALLHLGRLTGTYI) are interaction with host SCPS1. The Cytoplasmic portion of the chain corresponds to 951 to 1658 (YDHLAPMKDW…CMSADLEVIT (708 aa)). Catalysis depends on for protease NS2 activity; shared with dimeric partner residues histidine 953, glutamate 973, and cysteine 994. In terms of domain architecture, Peptidase S29 spans 1028 to 1209 (APITAYAQQT…ENLETTMRSP (182 aa)). Catalysis depends on charge relay system; for serine protease NS3 activity residues histidine 1084 and aspartate 1108. Residues cysteine 1124 and cysteine 1126 each coordinate Zn(2+). Serine 1166 serves as the catalytic Charge relay system; for serine protease NS3 activity. The Zn(2+) site is built by cysteine 1172 and histidine 1176. Residues 1218–1370 (PAVPHEFQVG…PNIEEVALPS (153 aa)) enclose the Helicase ATP-binding domain. 1231-1238 (APTGSGKS) is an ATP binding site. Mg(2+) contacts are provided by serine 1238 and glutamate 1318. The short motif at 1317-1320 (DECH) is the DECH box element. The segment at 1487–1499 (QRRGRTGRGRHGI) is RNA-binding. Residues 1659-1679 (STWVLVGGVVAALAAYCLTVG) form a helical membrane-spanning segment. Residues 1680–1691 (SVAIVGRIILSG) form an NS3-binding region. At 1680 to 1806 (SVAIVGRIIL…AVTSPLTTQQ (127 aa)) the chain is on the cytoplasmic side. A helical transmembrane segment spans residues 1807–1827 (TLLFNILGGWVASQIAPPTAA). Topologically, residues 1828–1829 (TA) are lumenal. Residues 1830–1850 (FVVSGMAGAAVGSIGLGRVLI) traverse the membrane as a helical segment. Aspartate 1851 is a topological domain (cytoplasmic). Residues 1852-1872 (ILAGYGAGVAGALVAFKIMCG) form a helical membrane-spanning segment. Over 1873–1882 (EKPTAEDLVN) the chain is Lumenal. A helical membrane pass occupies residues 1883–1903 (LLPSILCPGALVVGVICAAVL). At 1904–1973 (RRHIGPGEGA…WIGEDYSTPC (70 aa)) the chain is on the cytoplasmic side. Cysteine 1973 is lipidated: S-palmitoyl cysteine; by host. An intramembrane segment occupies 1974–2003 (DGTWLRAIWDWVCTALTDFKAWLQAKLLPQ). At 2004–2993 (LPGVPFLSCQ…YHSMSRARPR (990 aa)) the chain is on the cytoplasmic side. Residues cysteine 2012, cysteine 2030, cysteine 2032, and cysteine 2053 each coordinate Zn(2+). Positions 2121 to 2209 (EFFTELDGVR…ASSSASQLSA (89 aa)) are FKBP8-binding. A transcriptional activation region spans residues 2121 to 2334 (EFFTELDGVR…VPPPRRKRKP (214 aa)). The interaction with non-structural protein 4A stretch occupies residues 2136-2140 (PPCNP). Disordered stretches follow at residues 2187-2219 (AKRR…CTTQ), 2301-2337 (TWKQ…PVVL), and 2358-2413 (TQSI…SWST). Residues 2190-2441 (RLDRGSPPSL…ALITPCSAEE (252 aa)) form an interaction with host SKP2 region. Phosphoserine; by host occurs at positions 2195, 2198, 2202, 2205, 2208, and 2211. Positions 2195 to 2212 (SPPSLASSSASQLSAPSL) are enriched in low complexity. Residues 2211-2250 (SLKATCTTQGHHPDADLIEANLLWRQCMGGNITRVEAENK) are ISDR. Residues 2211 to 2276 (SLKATCTTQG…REISVSADCF (66 aa)) form an interaction with EIF2AK2/PKR region. The NS4B-binding stretch occupies residues 2250-2307 (KVVILDSFEPLKADDDDREISVSADCFRRGPAFPPALPIWARPGYDPPLLETWKQPDY). Positions 2300 to 2378 (ETWKQPDYDP…GTSSQPDSGP (79 aa)) are V3. Pro residues predominate over residues 2316-2327 (PLPPAGLPPVPP). The SH3-binding signature appears at 2323–2326 (PPVP). A Nuclear localization signal motif is present at residues 2328–2337 (PRRKRKPVVL). Residues 2358 to 2375 (TQSIEGQDSAVGTSSQPD) are compositionally biased toward polar residues. Serine 2465 carries the phosphoserine; by host modification. The region spanning 2637–2755 (PMAFSYDTRC…ICESQGTHED (119 aa)) is the RdRp catalytic domain. Aspartate 2643, aspartate 2741, and aspartate 2742 together coordinate Mg(2+). A helical transmembrane segment spans residues 2994 to 3014 (CILLCLLLLTVGVGIFLLPAR).

It belongs to the hepacivirus polyprotein family. Homooligomer. Interacts with E1 (via C-terminus). Interacts with the non-structural protein 5A. Interacts (via N-terminus) with host STAT1 (via SH2 domain); this interaction results in decreased STAT1 phosphorylation and ubiquitin-mediated proteasome-dependent STAT1 degradation, leading to decreased IFN-stimulated gene transcription. Interacts with host STAT3; this interaction constitutively activates STAT3. Interacts with host LTBR receptor. Interacts with host TNFRSF1A receptor and possibly induces apoptosis. Interacts with host HNRPK. Interacts with host YWHAE. Interacts with host UBE3A/E6AP. Interacts with host DDX3X. Interacts with host APOA2. Interacts with host RXRA protein. Interacts with host SP110 isoform 3/Sp110b; this interaction sequesters the transcriptional corepressor SP110 away from the nucleus. Interacts with host CREB3 nuclear transcription protein; this interaction triggers cell transformation. Interacts with host ACY3. Interacts with host C1QR1. Interacts with host RBM24; this interaction, which enhances the interaction of the mature core protein with 5'-UTR, may inhibit viral translation and favor replication. Interacts with host EIF2AK2/PKR; this interaction induces the autophosphorylation of EIF2AK2. Part of the viral assembly initiation complex composed of NS2, E1, E2, NS3, NS4A, NS5A and the mature core protein. As to quaternary structure, forms a heterodimer with envelope glycoprotein E2. Interacts with mature core protein. Interacts with protease NS2. The heterodimer E1/E2 interacts with host CLDN1; this interaction plays a role in viral entry into host cell. Interacts with host SPSB2 (via C-terminus). Part of the viral assembly initiation complex composed of NS2, E1, E2, NS3, NS4A, NS5A and the mature core protein. Interacts with host NEURL3; this interaction prevents E1 binding to glycoprotein E2. In terms of assembly, forms a heterodimer with envelope glycoprotein E1. Interacts with host CD81 and SCARB1 receptors; these interactions play a role in viral entry into host cell. Interacts with host EIF2AK2/PKR; this interaction inhibits EIF2AK2 and probably allows the virus to evade the innate immune response. Interacts with host CD209/DC-SIGN and CLEC4M/DC-SIGNR. Interact with host SPCS1; this interaction is essential for viral particle assembly. Interacts with protease NS2. The heterodimer E1/E2 interacts with host CLDN1; this interaction plays a role in viral entry into host cell. Part of the viral assembly initiation complex composed of NS2, E1, E2, NS3, NS4A, NS5A and the mature core protein. Interacts with host SLC3A2/4F2hc; the interaction may facilitate viral entry into host cell. Interacts with human PLSCR1. Homohexamer. Homoheptamer. Interacts with protease NS2. As to quaternary structure, homodimer. Interacts with host SPCS1; this interaction is essential for viral particle assembly. Interacts with envelope glycoprotein E1. Interacts with envelope glycoprotein E2. Interacts with viroporin p7. Interacts with serine protease/helicase NS3. Part of the replication complex composed of NS2, NS3, NS4A, NS4B, NS5A and the RNA-directed RNA polymerase embedded in an ER-derived membranous web. Part of the viral assembly initiation complex composed of NS2, E1, E2, NS3, NS4A, NS5A and the mature core protein. In terms of assembly, interacts with protease NS2. Interacts with non-structural protein 4A; this interaction stabilizes the folding of NS3 serine protease. NS3-NS4A interaction is essential for NS3 activation and allows membrane anchorage of the latter. NS3/NS4A complex also prevents phosphorylation of host IRF3, thus preventing the establishment of dsRNA induced antiviral state. Interacts with host MAVS; this interaction leads to the cleavage and inhibition of host MAVS. Interacts with host TICAM1; this interaction leads to the cleavage and inhibition of host TICAM1. Interacts with host TANK-binding kinase/TBK1; this interaction results in the inhibition of the association between TBK1 and IRF3, which leads to the inhibition of IRF3 activation. Interacts with host RBM24. Part of the replication complex composed of NS2, NS3, NS4A, NS4B, NS5A and the RNA-directed RNA polymerase embedded in an ER-derived membranous web. Part of the viral assembly initiation complex composed of NS2, E1, E2, NS3, NS4A, NS5A and the mature core protein. Interacts with NS3 serine protease; this interaction stabilizes the folding of NS3 serine protease. NS3-NS4A interaction is essential for NS3 activation and allows membrane anchorage of the latter. Interacts with non-structural protein 5A (via N-terminus). Part of the replication complex composed of NS2, NS3, NS4A, NS4B, NS5A and the RNA-directed RNA polymerase embedded in an ER-derived membranous web. Part of the viral assembly initiation complex composed of NS2, E1, E2, NS3, NS4A, NS5A and the mature core protein. As to quaternary structure, homomultimer. Interacts with non-structural protein NS5A. Interacts with host PLA2G4C; this interaction likely initiates the recruitment of replication complexes to lipid droplets. Interacts with host STING; this interaction disrupts the interaction between STING and TBK1 thereby suppressing the interferon signaling. Part of the replication complex composed of NS2, NS3, NS4A, NS4B, NS5A and the RNA-directed RNA polymerase embedded in an ER-derived membranous web. In terms of assembly, monomer. Homodimer; dimerization is required for RNA-binding. Interacts with the mature core protein. Interacts (via N-terminus) with non-structural protein 4A. Interacts with non-structural protein 4B. Interacts (via region D2) with RNA-directed RNA polymerase. Part of the viral assembly initiation complex composed of NS2, E1, E2, NS3, NS4A, NS5A and the mature core protein. Part of the replication complex composed of NS2, NS3, NS4A, NS4B, NS5A and the RNA-directed RNA polymerase embedded in an ER-derived membranous web. Interacts with host GRB2. Interacts with host BIN1. Interacts with host PIK3R1. Interacts with host SRCAP. Interacts with host FKBP8. Interacts (via C-terminus) with host VAPB (via MSP domain). Interacts with host EIF2AK2/PKR; this interaction leads to disruption of EIF2AK2 dimerization by NS5A and probably allows the virus to evade the innate immune response. Interacts (via N-terminus) with host PACSIN2 (via N-terminus); this interaction attenuates protein kinase C alpha-mediated phosphorylation of PACSIN2 by disrupting the interaction between PACSIN2 and PRKCA. Interacts (via N-terminus) with host SRC kinase (via SH2 domain). Interacts with most Src-family kinases. Interacts with host IFI27 and SKP2; promotes the ubiquitin-mediated proteasomal degradation of NS5A. Interacts with host GPS2. Interacts with host TNFRSF21; this interaction allows the modulation by the virus of JNK, p38 MAPK, STAT3, and Akt signaling pathways in a DR6-dependent manner. Interacts (via N-terminus) with host CIDEB (via N-terminus); this interaction seems to regulate the association of HCV particles with APOE. Interacts with host CHKA/Choline Kinase-alpha; CHKA bridges host PI4KA and NS5A and potentiates NS5A-stimulated PI4KA activity, which then facilitates the targeting of the ternary complex to the ER for viral replication. Interacts with host SPSB2 (via C-terminus); this interaction targets NS5A for ubiquitination and degradation. Interacts with host RAB18; this interaction may promote the association of NS5A and other replicase components with lipid droplets. Interacts (via region D2) with host PPIA/CYPA; the interaction stimulates RNA-binding ability of NS5A and is dependent on the peptidyl-prolyl cis-trans isomerase activity of PPIA/CYPA. Interacts with host TRIM14; this interaction induces the degradation of NS5A. Homooligomer. Interacts with non-structural protein 5A. Interacts with host VAPB. Interacts with host PRK2/PKN2. Interacts with host HNRNPA1 and SEPT6; these interactions facilitate viral replication. Part of the replication complex composed of NS2, NS3, NS4A, NS4B, NS5A and the RNA-directed RNA polymerase. Requires Zn(2+) as cofactor. It depends on Mg(2+) as a cofactor. Post-translationally, specific enzymatic cleavages in vivo yield mature proteins. The structural proteins, core, E1, E2 and p7 are produced by proteolytic processing by host signal peptidases. The core protein precursor is synthesized as a 23 kDa, which is retained in the ER membrane through the hydrophobic signal peptide. Cleavage by the signal peptidase releases the 21 kDa mature core protein. The cleavage of the core protein precursor occurs between aminoacids 176 and 188 but the exact cleavage site is not known. Some degraded forms of the core protein appear as well during the course of infection. The other proteins (p7, NS2, NS3, NS4A, NS4B, NS5A and NS5B) are cleaved by the viral proteases. Autoprocessing between NS2 and NS3 is mediated by the NS2 cysteine protease catalytic domain and regulated by the NS3 N-terminal domain. Phosphorylated by host PKC and PKA. In terms of processing, ubiquitinated; mediated by UBE3A and leading to core protein subsequent proteasomal degradation. Post-translationally, highly N-glycosylated. Palmitoylation is required for NS2/3 autoprocessing and E2 recruitment to membranes. In terms of processing, palmitoylated. This modification may play a role in its polymerization or in protein-protein interactions. Post-translationally, phosphorylated on serines in a basal form termed p56. p58 is a hyperphosphorylated form of p56. p56 and p58 coexist in the cell in roughly equivalent amounts. Hyperphosphorylation is dependent on the presence of NS4A. Host CSNK1A1/CKI-alpha or RPS6KB1 kinases may be responsible for NS5A phosphorylation. Tyrosine phosphorylation is essential for the interaction with host SRC. In terms of processing, the N-terminus is phosphorylated by host PRK2/PKN2.

The protein resides in the host endoplasmic reticulum membrane. The protein localises to the host mitochondrion membrane. Its subcellular location is the virion. It is found in the host cytoplasm. It localises to the host nucleus. The protein resides in the host lipid droplet. The protein localises to the virion membrane. Its subcellular location is the host mitochondrion. It is found in the host cell membrane. It localises to the host perinuclear region. The enzyme catalyses Hydrolysis of four peptide bonds in the viral precursor polyprotein, commonly with Asp or Glu in the P6 position, Cys or Thr in P1 and Ser or Ala in P1'.. It carries out the reaction a ribonucleoside 5'-triphosphate + H2O = a ribonucleoside 5'-diphosphate + phosphate + H(+). It catalyses the reaction ATP + H2O = ADP + phosphate + H(+). The catalysed reaction is RNA(n) + a ribonucleoside 5'-triphosphate = RNA(n+1) + diphosphate. With respect to regulation, inhibited by the antiviral drug hexamethylene amiloride. Inhibition by amantadine appears to be genotype-dependent. Also inhibited by long-alkyl-chain iminosugar derivatives. Its activity is regulated as follows. Activity is up-regulated by PRK2/PKN2-mediated phosphorylation. Packages viral RNA to form a viral nucleocapsid, and promotes virion budding. Participates in the viral particle production as a result of its interaction with the non-structural protein 5A. Binds RNA and may function as a RNA chaperone to induce the RNA structural rearrangements taking place during virus replication. Modulates viral translation initiation by interacting with viral IRES and 40S ribosomal subunit. Affects various cell signaling pathways, host immunity and lipid metabolism. Prevents the establishment of cellular antiviral state by blocking the interferon-alpha/beta (IFN-alpha/beta) and IFN-gamma signaling pathways and by blocking the formation of phosphorylated STAT1 and promoting ubiquitin-mediated proteasome-dependent degradation of STAT1. Activates STAT3 leading to cellular transformation. Regulates the activity of cellular genes, including c-myc and c-fos. May repress the promoter of p53, and sequester CREB3 and SP110 isoform 3/Sp110b in the cytoplasm. Represses cell cycle negative regulating factor CDKN1A, thereby interrupting an important check point of normal cell cycle regulation. Targets transcription factors involved in the regulation of inflammatory responses and in the immune response: suppresses TNF-induced NF-kappa-B activation, and activates AP-1. Binds to dendritic cells (DCs) via C1QR1, resulting in down-regulation of T-lymphocytes proliferation. Alters lipid metabolism by interacting with hepatocellular proteins involved in lipid accumulation and storage. Induces up-regulation of FAS promoter activity, and thereby contributes to the increased triglyceride accumulation in hepatocytes (steatosis). Its function is as follows. Forms a heterodimer with envelope glycoprotein E2, which mediates virus attachment to the host cell, virion internalization through clathrin-dependent endocytosis and fusion with host membrane. Fusion with the host cell is most likely mediated by both E1 and E2, through conformational rearrangements of the heterodimer required for fusion rather than a classical class II fusion mechanism. E1/E2 heterodimer binds host apolipoproteins such as APOB and ApoE thereby forming a lipo-viro-particle (LVP). APOE associated to the LVP allows the initial virus attachment to cell surface receptors such as the heparan sulfate proteoglycans (HSPGs), syndecan-1 (SDC1), syndecan-1 (SDC2), the low-density lipoprotein receptor (LDLR) and scavenger receptor class B type I (SCARB1). The cholesterol transfer activity of SCARB1 allows E2 exposure and binding of E2 to SCARB1 and the tetraspanin CD81. E1/E2 heterodimer binding on CD81 activates the epithelial growth factor receptor (EGFR) signaling pathway. Diffusion of the complex E1-E2-EGFR-SCARB1-CD81 to the cell lateral membrane allows further interaction with Claudin 1 (CLDN1) and occludin (OCLN) to finally trigger HCV entry. Functionally, forms a heterodimer with envelope glycoprotein E1, which mediates virus attachment to the host cell, virion internalization through clathrin-dependent endocytosis and fusion with host membrane. Fusion with the host cell is most likely mediated by both E1 and E2, through conformational rearrangements of the heterodimer required for fusion rather than a classical class II fusion mechanism. The interaction between envelope glycoprotein E2 and host apolipoprotein E/APOE allows the proper assembly, maturation and infectivity of the viral particles. This interaction is probably promoted via the up-regulation of cellular autophagy by the virus. E1/E2 heterodimer binds host apolipoproteins such as APOB and APOE thereby forming a lipo-viro-particle (LVP). APOE associated to the LVP allows the initial virus attachment to cell surface receptors such as the heparan sulfate proteoglycans (HSPGs), syndecan-1 (SDC1), syndecan-1 (SDC2), the low-density lipoprotein receptor (LDLR) and scavenger receptor class B type I (SCARB1). The cholesterol transfer activity of SCARB1 allows E2 exposure and binding of E2 to SCARB1 and the tetraspanin CD81. E1/E2 heterodimer binding on CD81 activates the epithelial growth factor receptor (EGFR) signaling pathway. Diffusion of the complex E1-E2-EGFR-SCARB1-CD81 to the cell lateral membrane allows further interaction with Claudin 1 (CLDN1) and occludin (OCLN) to finally trigger HCV entry. Inhibits host EIF2AK2/PKR activation, preventing the establishment of an antiviral state. Viral ligand for CD209/DC-SIGN and CLEC4M/DC-SIGNR, which are respectively found on dendritic cells (DCs), and on liver sinusoidal endothelial cells and macrophage-like cells of lymph node sinuses. These interactions allow the capture of circulating HCV particles by these cells and subsequent facilitated transmission to permissive cells such as hepatocytes and lymphocyte subpopulations. The interaction between E2 and host amino acid transporter complex formed by SLC3A2 and SLC7A5/LAT1 may facilitate viral entry into host cell. In terms of biological role, ion channel protein that acts as a viroporin and plays an essential role in the assembly, envelopment and secretion of viral particles. Regulates the host cell secretory pathway, which induces the intracellular retention of viral glycoproteins and favors assembly of viral particles. Creates a pore in acidic organelles and releases Ca(2+) and H(+) in the cytoplasm of infected cells, leading to a productive viral infection. High levels of cytoplasmic Ca(2+) may trigger membrane trafficking and transport of viral ER-associated proteins to viroplasms, sites of viral genome replication. This ionic imbalance induces the assembly of the inflammasome complex, which triggers the maturation of pro-IL-1beta into IL-1beta through the action of caspase-1. Targets also host mitochondria and induces mitochondrial depolarization. In addition of its role as a viroporin, acts as a lipid raft adhesion factor. Cysteine protease required for the proteolytic auto-cleavage between the non-structural proteins NS2 and NS3. The N-terminus of NS3 is required for the function of NS2 protease (active region NS2-3). Promotes the initiation of viral particle assembly by mediating the interaction between structural and non-structural proteins. Its function is as follows. Displays three enzymatic activities: serine protease with a chymotrypsin-like fold, NTPase and RNA helicase. NS3 serine protease, in association with NS4A, is responsible for the cleavages of NS3-NS4A, NS4A-NS4B, NS4B-NS5A and NS5A-NS5B. The NS3/NS4A complex prevents phosphorylation of host IRF3, thus preventing the establishment of dsRNA induced antiviral state. The NS3/NS4A complex induces host amino acid transporter component SLC3A2, thus contributing to HCV propagation. NS3 RNA helicase binds to RNA and unwinds both dsDNA and dsRNA in the 3' to 5' direction, and likely resolves RNA complicated stable secondary structures in the template strand. Binds a single ATP and catalyzes the unzipping of a single base pair of dsRNA. Inhibits host antiviral proteins TBK1 and IRF3 thereby preventing the establishment of an antiviral state. Cleaves host MAVS/CARDIF thereby preventing the establishment of an antiviral state. Cleaves host TICAM1/TRIF, thereby disrupting TLR3 signaling and preventing the establishment of an antiviral state. Functionally, peptide cofactor which forms a non-covalent complex with the N-terminal of NS3 serine protease. The NS3/NS4A complex prevents phosphorylation of host IRF3, thus preventing the establishment of dsRNA induced antiviral state. The NS3/NS4A complex induces host amino acid transporter component SLC3A2, thus contributing to HCV propagation. In terms of biological role, induces a specific membrane alteration that serves as a scaffold for the virus replication complex. This membrane alteration gives rise to the so-called ER-derived membranous web that contains the replication complex. NS4B self-interaction contributes to its function in membranous web formation. Promotes host TRIF protein degradation in a CASP8-dependent manner thereby inhibiting host TLR3-mediated interferon signaling. Disrupts the interaction between STING and TBK1 contributing to the inhibition of interferon signaling. Phosphorylated protein that is indispensable for viral replication and assembly. Both hypo- and hyperphosphorylated states are required for the viral life cycle. The hyperphosphorylated form of NS5A is an inhibitor of viral replication. Involved in RNA-binding and especially in binding to the viral genome. Zinc is essential for RNA-binding. Participates in the viral particle production as a result of its interaction with the mature viral core protein. Its interaction with host VAPB may target the viral replication complex to vesicles. Down-regulates viral IRES translation initiation. Mediates interferon resistance, presumably by interacting with and inhibiting host EIF2AK2/PKR. Prevents BIN1-induced apoptosis. Acts as a transcriptional activator of some host genes important for viral replication when localized in the nucleus. Via the interaction with host PACSIN2, modulates lipid droplet formation in order to promote virion assembly. Modulates TNFRSF21/DR6 signaling pathway for viral propagation. Its function is as follows. RNA-dependent RNA polymerase that performs primer-template recognition and RNA synthesis during viral replication. Initiates RNA transcription/replication at a flavin adenine dinucleotide (FAD), resulting in a 5'- FAD cap on viral RNAs. In this way, recognition of viral 5' RNA by host pattern recognition receptors can be bypassed, thereby evading activation of antiviral pathways. This is Genome polyprotein from Hepatitis C virus genotype 5a (isolate SA13) (HCV).